Reading from the N-terminus, the 255-residue chain is NAD kinase (255 aa).

Residue aspartate 44 is the Proton acceptor of the active site. NAD(+)-binding positions include 44–45, histidine 49, 114–115, aspartate 144, alanine 152, 155–160, and glutamine 216; these read DG, NE, and SAYNLS.

Belongs to the NAD kinase family. It depends on a divalent metal cation as a cofactor.

The protein localises to the cytoplasm. It catalyses the reaction NAD(+) + ATP = ADP + NADP(+) + H(+). Functionally, involved in the regulation of the intracellular balance of NAD and NADP, and is a key enzyme in the biosynthesis of NADP. Catalyzes specifically the phosphorylation on 2'-hydroxyl of the adenosine moiety of NAD to yield NADP. The chain is NAD kinase from Rickettsia akari (strain Hartford).